The primary structure comprises 178 residues: Transcription termination/antitermination protein NusG (178 aa).

Positions 130–159 constitute a KOW domain; that stretch reads SVKVKEGPFANFIGTIEEIQLDKRKLKVHV.

It belongs to the NusG family.

Participates in transcription elongation, termination and antitermination. The polypeptide is Transcription termination/antitermination protein NusG (Halalkalibacterium halodurans (strain ATCC BAA-125 / DSM 18197 / FERM 7344 / JCM 9153 / C-125) (Bacillus halodurans)).